A 184-amino-acid polypeptide reads, in one-letter code: Serine recombinase PinE (184 aa).

The Resolvase/invertase-type recombinase catalytic domain maps to 1-134 (MLIGYVRVST…AGLETARAQG (134 aa)). Catalysis depends on serine 9, which acts as the O-(5'-phospho-DNA)-serine intermediate. The H-T-H motif DNA-binding region spans 161–180 (RQKVAIIYDVGVSTLYKRFP).

Belongs to the site-specific recombinase resolvase family.

This protein catalyzes the inversion of an 1800-bp E.coli DNA fragment, the P region, which can exist in either orientation. The function of the inversion is not yet clear. The sequence is that of Serine recombinase PinE (pinE) from Escherichia coli (strain K12).